Consider the following 556-residue polypeptide: Amidophosphoribosyltransferase (556 aa).

A propeptide spanning residues 1 to 57 (MCLAVGVGVRAPKHVPQIRRLGRAGRRLRCVTNCALGSCPIVTVQQPGRDFSSPREE) is cleaved from the precursor. Cys58 serves as the catalytic Nucleophile. A Glutamine amidotransferase type-2 domain is found at 58–284 (CGVFGVWAPG…PGELLAIDAD (227 aa)). A [4Fe-4S] cluster-binding site is contributed by Cys299. Residues Ser346, Asp408, and Asp409 each coordinate Mg(2+). Residues Cys445, Cys501, and Cys504 each contribute to the [4Fe-4S] cluster site.

This sequence in the C-terminal section; belongs to the purine/pyrimidine phosphoribosyltransferase family. Mg(2+) is required as a cofactor. Requires [4Fe-4S] cluster as cofactor.

The enzyme catalyses 5-phospho-beta-D-ribosylamine + L-glutamate + diphosphate = 5-phospho-alpha-D-ribose 1-diphosphate + L-glutamine + H2O. It participates in purine metabolism; IMP biosynthesis via de novo pathway; N(1)-(5-phospho-D-ribosyl)glycinamide from 5-phospho-alpha-D-ribose 1-diphosphate: step 1/2. In terms of biological role, catalyzes the formation of phosphoribosylamine from phosphoribosylpyrophosphate (PRPP) and glutamine. The protein is Amidophosphoribosyltransferase of Mycobacterium leprae (strain TN).